A 126-amino-acid polypeptide reads, in one-letter code: Histone H2B type 1-B (126 aa).

The span at 1-12 (MPEPSKSAPAPK) shows a compositional bias: low complexity. The tract at residues 1–35 (MPEPSKSAPAPKKGSKKAITKAQKKDGKKRKRSRK) is disordered. Residue P2 is modified to N-acetylproline. ADP-ribosyl glutamic acid is present on E3. The residue at position 6 (K6) is an N6-(2-hydroxyisobutyryl)lysine; alternate. K6 bears the N6-(beta-hydroxybutyryl)lysine; alternate mark. N6-acetyllysine; alternate is present on K6. K6 bears the N6-butyryllysine; alternate mark. The residue at position 6 (K6) is an N6-crotonyllysine; alternate. The residue at position 6 (K6) is an N6-lactoyllysine; alternate. A Glycyl lysine isopeptide (Lys-Gly) (interchain with G-Cter in SUMO2); alternate cross-link involves residue K6. S7 bears the ADP-ribosylserine mark. K12 is modified (N6-(beta-hydroxybutyryl)lysine; alternate). N6-acetyllysine; alternate occurs at positions 12 and 13. K12 and K13 each carry N6-crotonyllysine; alternate. An N6-lactoyllysine; alternate modification is found at K12. K13 is modified (N6-(2-hydroxyisobutyryl)lysine; alternate). S15 bears the Phosphoserine; by STK4/MST1 mark. N6-acetyllysine; alternate occurs at positions 16, 17, 21, and 24. K16, K17, K21, and K24 each carry N6-crotonyllysine; alternate. N6-lactoyllysine; alternate occurs at positions 16, 17, 21, and 24. N6-(beta-hydroxybutyryl)lysine; alternate occurs at positions 17 and 21. K17 is subject to N6-glutaryllysine; alternate. 2 positions are modified to N6-(2-hydroxyisobutyryl)lysine; alternate: K21 and K24. At K21 the chain carries N6-butyryllysine; alternate. Residue K21 forms a Glycyl lysine isopeptide (Lys-Gly) (interchain with G-Cter in SUMO2); alternate linkage. K25 carries the N6-(2-hydroxyisobutyryl)lysine modification. N6-(2-hydroxyisobutyryl)lysine; alternate is present on K35. Residue K35 is modified to N6-(beta-hydroxybutyryl)lysine; alternate. K35 carries the post-translational modification N6-crotonyllysine; alternate. At K35 the chain carries N6-glutaryllysine; alternate. An N6-succinyllysine; alternate modification is found at K35. K35 is covalently cross-linked (Glycyl lysine isopeptide (Lys-Gly) (interchain with G-Cter in ubiquitin); alternate). E36 is modified (polyADP-ribosyl glutamic acid). S37 is subject to Phosphoserine; by AMPK. N6-(2-hydroxyisobutyryl)lysine; alternate is present on residues K44, K47, and K58. Residue K44 is modified to N6-lactoyllysine; alternate. N6-glutaryllysine; alternate is present on residues K44 and K47. K47 carries the N6-methyllysine; alternate modification. Position 58 is an N6,N6-dimethyllysine; alternate (K58). Dimethylated arginine is present on R80. The residue at position 86 (K86) is an N6-(2-hydroxyisobutyryl)lysine; alternate. K86 is subject to N6-(beta-hydroxybutyryl)lysine; alternate. K86 carries the N6-acetyllysine; alternate modification. K86 is subject to N6-lactoyllysine; alternate. Position 86 is an N6,N6,N6-trimethyllysine; alternate (K86). R87 and R93 each carry omega-N-methylarginine. Residue K109 is modified to N6-(2-hydroxyisobutyryl)lysine; alternate. K109 carries the post-translational modification N6-lactoyllysine; alternate. K109 is modified (N6-glutaryllysine; alternate). N6-methyllysine; alternate is present on K109. O-linked (GlcNAc) serine glycosylation occurs at S113. T116 is subject to Phosphothreonine. An N6-(2-hydroxyisobutyryl)lysine; alternate mark is found at K117 and K121. N6-(beta-hydroxybutyryl)lysine; alternate occurs at positions 117 and 121. 2 positions are modified to N6-lactoyllysine; alternate: K117 and K121. 2 positions are modified to N6-glutaryllysine; alternate: K117 and K121. An N6-succinyllysine; alternate mark is found at K117 and K121. K117 carries the post-translational modification N6-malonyllysine; alternate. K117 carries the N6-methylated lysine; alternate modification. K121 is covalently cross-linked (Glycyl lysine isopeptide (Lys-Gly) (interchain with G-Cter in ubiquitin); alternate).

Belongs to the histone H2B family. In terms of assembly, the nucleosome is a histone octamer containing two molecules each of H2A, H2B, H3 and H4 assembled in one H3-H4 heterotetramer and two H2A-H2B heterodimers. The octamer wraps approximately 147 bp of DNA. In terms of processing, monoubiquitination at Lys-35 (H2BK34Ub) by the MSL1/MSL2 dimer is required for histone H3 'Lys-4' (H3K4me) and 'Lys-79' (H3K79me) methylation and transcription activation at specific gene loci, such as HOXA9 and MEIS1 loci. Similarly, monoubiquitination at Lys-121 (H2BK120Ub) by the RNF20/40 complex gives a specific tag for epigenetic transcriptional activation and is also prerequisite for histone H3 'Lys-4' and 'Lys-79' methylation. It also functions cooperatively with the FACT dimer to stimulate elongation by RNA polymerase II. H2BK120Ub also acts as a regulator of mRNA splicing: deubiquitination by USP49 is required for efficient cotranscriptional splicing of a large set of exons. Phosphorylation at Ser-37 (H2BS36ph) by AMPK in response to stress promotes transcription. Phosphorylated on Ser-15 (H2BS14ph) by STK4/MST1 during apoptosis; which facilitates apoptotic chromatin condensation. Also phosphorylated on Ser-15 in response to DNA double strand breaks (DSBs), and in correlation with somatic hypermutation and immunoglobulin class-switch recombination. Post-translationally, glcNAcylation at Ser-113 promotes monoubiquitination of Lys-121. It fluctuates in response to extracellular glucose, and associates with transcribed genes. In terms of processing, ADP-ribosylated by PARP1 or PARP2 on Ser-7 (H2BS6ADPr) in response to DNA damage. H2BS6ADPr promotes recruitment of CHD1L. Mono-ADP-ribosylated on Glu-3 (H2BE2ADPr) by PARP3 in response to single-strand breaks. Poly ADP-ribosylation on Glu-36 (H2BE35ADPr) by PARP1 regulates adipogenesis: it inhibits phosphorylation at Ser-37 (H2BS36ph), thereby blocking expression of pro-adipogenetic genes. Crotonylation (Kcr) is specifically present in male germ cells and marks testis-specific genes in post-meiotic cells, including X-linked genes that escape sex chromosome inactivation in haploid cells. Crotonylation marks active promoters and enhancers and confers resistance to transcriptional repressors. It is also associated with post-meiotically activated genes on autosomes. Post-translationally, lactylated in macrophages by EP300/P300 by using lactoyl-CoA directly derived from endogenous or exogenous lactate, leading to stimulates gene transcription.

It localises to the nucleus. The protein localises to the chromosome. Functionally, core component of nucleosome. Nucleosomes wrap and compact DNA into chromatin, limiting DNA accessibility to the cellular machineries which require DNA as a template. Histones thereby play a central role in transcription regulation, DNA repair, DNA replication and chromosomal stability. DNA accessibility is regulated via a complex set of post-translational modifications of histones, also called histone code, and nucleosome remodeling. The chain is Histone H2B type 1-B from Homo sapiens (Human).